Consider the following 218-residue polypeptide: Large ribosomal subunit protein bL25 (218 aa).

The tract at residues 187–218 (SATAAVEEAKEDGAPEESAQGQGAAEAQETNK) is disordered. The span at 202–218 (EESAQGQGAAEAQETNK) shows a compositional bias: low complexity.

This sequence belongs to the bacterial ribosomal protein bL25 family. CTC subfamily. In terms of assembly, part of the 50S ribosomal subunit; part of the 5S rRNA/L5/L18/L25 subcomplex. Contacts the 5S rRNA. Binds to the 5S rRNA independently of L5 and L18.

Functionally, this is one of the proteins that binds to the 5S RNA in the ribosome where it forms part of the central protuberance. The chain is Large ribosomal subunit protein bL25 from Anaplasma marginale (strain St. Maries).